The primary structure comprises 334 residues: GTP 3',8-cyclase (334 aa).

The Radical SAM core domain occupies 11 to 236 (GFNRKIDYLR…ESTESSQGPA (226 aa)). Arg-20 provides a ligand contact to GTP. Cys-27 and Cys-31 together coordinate [4Fe-4S] cluster. Residue Tyr-33 participates in S-adenosyl-L-methionine binding. [4Fe-4S] cluster is bound at residue Cys-34. Arg-69 contributes to the GTP binding site. An S-adenosyl-L-methionine-binding site is contributed by Gly-73. Position 100 (Thr-100) interacts with GTP. Ser-124 contacts S-adenosyl-L-methionine. Lys-161 contacts GTP. Met-195 is a binding site for S-adenosyl-L-methionine. [4Fe-4S] cluster is bound by residues Cys-260 and Cys-263. GTP is bound at residue 265–267 (RVR). Cys-277 contacts [4Fe-4S] cluster.

Belongs to the radical SAM superfamily. MoaA family. As to quaternary structure, monomer and homodimer. Requires [4Fe-4S] cluster as cofactor.

It carries out the reaction GTP + AH2 + S-adenosyl-L-methionine = (8S)-3',8-cyclo-7,8-dihydroguanosine 5'-triphosphate + 5'-deoxyadenosine + L-methionine + A + H(+). The protein operates within cofactor biosynthesis; molybdopterin biosynthesis. Its function is as follows. Catalyzes the cyclization of GTP to (8S)-3',8-cyclo-7,8-dihydroguanosine 5'-triphosphate. This Pseudomonas putida (strain W619) protein is GTP 3',8-cyclase.